The following is a 227-amino-acid chain: Lipoprotein-releasing system ATP-binding protein LolD (227 aa).

The region spanning isoleucine 8–threonine 226 is the ABC transporter domain. Glycine 44–threonine 51 serves as a coordination point for ATP.

This sequence belongs to the ABC transporter superfamily. Lipoprotein translocase (TC 3.A.1.125) family. As to quaternary structure, the complex is composed of two ATP-binding proteins (LolD) and two transmembrane proteins (LolC and LolE).

The protein localises to the cell inner membrane. Part of the ABC transporter complex LolCDE involved in the translocation of mature outer membrane-directed lipoproteins, from the inner membrane to the periplasmic chaperone, LolA. Responsible for the formation of the LolA-lipoprotein complex in an ATP-dependent manner. In Syntrophotalea carbinolica (strain DSM 2380 / NBRC 103641 / GraBd1) (Pelobacter carbinolicus), this protein is Lipoprotein-releasing system ATP-binding protein LolD.